The primary structure comprises 554 residues: MDIKRTVLWVIFFMSAVMLYDNWQRSHGRPSMFFPSATQTAPAAAGGASGTGATTTTAGEVPAAAAGTAPSTTAPAAQAQLVKFSTDVYDGEIDTRGGTLAKLTLKKQGDGKQPDLYITLFDHTAGHTYLARTGLLGGDFPNHNDVYTQVNAGPTSLTGDQNALKLSFESPVKGGVKVVKTYTFTRGSYVIGVDTKIDNVGTAPVTPTVYMELVRDNTAVETPMFSHTFLGPAVYTDAKHFQKIDFSDLDKNKANFEKAADNGWVAMVQHYFASAWIPQQGAKRDIYAEKIDPALYRVGVKQPVAAIAPGQSADVQARLFAGPEEERMLEGIAPGLELVKDYGWVTIIAKPLFWLLEKIHGFVGNWGWAIVLLTVLIKAVFFPLSAASYKSMARMKEITPRMQALRERFKSDPQKMNAALMELYKTEKVNPFGGCLPVVIQIPVFISLYWVLLASVEMRGAPWILWIHDLSQRDPFFILPVLMAVSMFVQTSLNPTPPDPVQAKMMKFMPIAFSVMFFFFPAGLVLYYVVNNVLSIAQQYYITRKLGGVKKKPA.

5 helical membrane-spanning segments follow: residues 7–24, 362–382, 436–456, 475–495, and 510–530; these read VLWV…DNWQ, FVGN…AVFF, LPVV…LASV, PFFI…SLNP, and PIAF…YYVV.

The protein belongs to the OXA1/ALB3/YidC family. Type 1 subfamily. In terms of assembly, interacts with the Sec translocase complex via SecD. Specifically interacts with transmembrane segments of nascent integral membrane proteins during membrane integration.

The protein localises to the cell inner membrane. Required for the insertion and/or proper folding and/or complex formation of integral membrane proteins into the membrane. Involved in integration of membrane proteins that insert both dependently and independently of the Sec translocase complex, as well as at least some lipoproteins. Aids folding of multispanning membrane proteins. The sequence is that of Membrane protein insertase YidC from Burkholderia ambifaria (strain MC40-6).